A 201-amino-acid polypeptide reads, in one-letter code: 3-isopropylmalate dehydratase small subunit (201 aa).

Belongs to the LeuD family. LeuD type 1 subfamily. In terms of assembly, heterodimer of LeuC and LeuD.

The enzyme catalyses (2R,3S)-3-isopropylmalate = (2S)-2-isopropylmalate. Its pathway is amino-acid biosynthesis; L-leucine biosynthesis; L-leucine from 3-methyl-2-oxobutanoate: step 2/4. In terms of biological role, catalyzes the isomerization between 2-isopropylmalate and 3-isopropylmalate, via the formation of 2-isopropylmaleate. The chain is 3-isopropylmalate dehydratase small subunit from Methylorubrum extorquens (strain CM4 / NCIMB 13688) (Methylobacterium extorquens).